The primary structure comprises 367 residues: 3-isopropylmalate dehydrogenase (367 aa).

77 to 90 contributes to the NAD(+) binding site; it reads GPKYDDLDFSVKPE. Positions 97, 107, 135, and 224 each coordinate substrate. 3 residues coordinate Mg(2+): Asp-224, Asp-248, and Asp-252. 287-299 serves as a coordination point for NAD(+); the sequence is GSAPDIAGQGKAN.

The protein belongs to the isocitrate and isopropylmalate dehydrogenases family. LeuB type 1 subfamily. Homodimer. The cofactor is Mg(2+). Mn(2+) serves as cofactor.

The protein localises to the cytoplasm. It carries out the reaction (2R,3S)-3-isopropylmalate + NAD(+) = 4-methyl-2-oxopentanoate + CO2 + NADH. Its pathway is amino-acid biosynthesis; L-leucine biosynthesis; L-leucine from 3-methyl-2-oxobutanoate: step 3/4. Its function is as follows. Catalyzes the oxidation of 3-carboxy-2-hydroxy-4-methylpentanoate (3-isopropylmalate) to 3-carboxy-4-methyl-2-oxopentanoate. The product decarboxylates to 4-methyl-2 oxopentanoate. This is 3-isopropylmalate dehydrogenase from Ruegeria pomeroyi (strain ATCC 700808 / DSM 15171 / DSS-3) (Silicibacter pomeroyi).